Reading from the N-terminus, the 273-residue chain is MSIEEENVPTTVDSGAADTTVKSPEKKPAAKGGKSKKTTTAKATKKPVKAAAPTKKKTTSSHPTYEEMIKDAIVTLKERTGSSQYAIQKFIEEKHKSLPPTFRKLLLVNLKRLVASEKLVKVKASFKIPSARSAATPKPAAPVKKKATVVAKPKGKVAAAVAPAKAKAAAKGTKKPAAKVVAKAKVTAKPKAKVTAAKPKSKSVAAVSKTKAVAAKPKAKERPAKASRTSTRTSPGKKVAAPAKKVAVTKKAPAKSVKVKSPAKRASTRKAKK.

The tract at residues 1–63 (MSIEEENVPT…TKKKTTSSHP (63 aa)) is disordered. An N-acetylserine modification is found at Ser2. Ser14 bears the Phosphoserine mark. Over residues 33-59 (GKSKKTTTAKATKKPVKAAAPTKKKTT) the composition is skewed to basic residues. In terms of domain architecture, H15 spans 61-130 (SHPTYEEMIK…KVKASFKIPS (70 aa)). Residues Lys156 and Lys165 each participate in a glycyl lysine isopeptide (Lys-Gly) (interchain with G-Cter in ubiquitin) cross-link. Low complexity-rich tracts occupy residues 193–216 (KVTA…VAAK) and 237–256 (KKVA…PAKS). The interval 193–273 (KVTAAKPKSK…KRASTRKAKK (81 aa)) is disordered. Residues 257-273 (VKVKSPAKRASTRKAKK) show a composition bias toward basic residues.

This sequence belongs to the histone H1/H5 family.

The protein resides in the nucleus. It is found in the chromosome. Histones H1 are necessary for the condensation of nucleosome chains into higher-order structures. The sequence is that of Histone H1.2 from Arabidopsis thaliana (Mouse-ear cress).